Reading from the N-terminus, the 108-residue chain is UPF0060 membrane protein SAB2216c (108 aa).

4 helical membrane-spanning segments follow: residues 5 to 25, 31 to 51, 60 to 80, and 86 to 106; these read IFIF…IWLW, CSLV…IATF, VYAA…MVVD, and KYDV…LLPS.

The protein belongs to the UPF0060 family.

The protein localises to the cell membrane. The polypeptide is UPF0060 membrane protein SAB2216c (Staphylococcus aureus (strain bovine RF122 / ET3-1)).